The sequence spans 196 residues: Ribosomal RNA small subunit methyltransferase G (196 aa).

S-adenosyl-L-methionine-binding positions include G77, F82, 127–128 (AE), and R140.

Belongs to the methyltransferase superfamily. RNA methyltransferase RsmG family.

It localises to the cytoplasm. Specifically methylates the N7 position of a guanine in 16S rRNA. The polypeptide is Ribosomal RNA small subunit methyltransferase G (Aquifex aeolicus (strain VF5)).